Reading from the N-terminus, the 87-residue chain is HssA/B-like protein 58 (87 aa).

Positions 1–13 (MTILSAITSISRP) are enriched in polar residues. Residues 1–31 (MTILSAITSISRPNKSSKSVISSNGGSSLSM) form a disordered region. Residues 14–31 (NKSSKSVISSNGGSSLSM) show a composition bias toward low complexity.

It belongs to the hssA/B family.

The polypeptide is HssA/B-like protein 58 (hssl58) (Dictyostelium discoideum (Social amoeba)).